The sequence spans 430 residues: Dihydroorotase (430 aa).

Zn(2+)-binding residues include H61 and H63. Residues 63 to 65 and N95 contribute to the substrate site; that span reads HLR. Zn(2+)-binding residues include D153, H180, and H233. N279 serves as a coordination point for substrate. D306 lines the Zn(2+) pocket. D306 is a catalytic residue. H310 is a substrate binding site.

It belongs to the metallo-dependent hydrolases superfamily. DHOase family. Class I DHOase subfamily. Zn(2+) is required as a cofactor.

The catalysed reaction is (S)-dihydroorotate + H2O = N-carbamoyl-L-aspartate + H(+). It functions in the pathway pyrimidine metabolism; UMP biosynthesis via de novo pathway; (S)-dihydroorotate from bicarbonate: step 3/3. In terms of biological role, catalyzes the reversible cyclization of carbamoyl aspartate to dihydroorotate. This Caldicellulosiruptor saccharolyticus (strain ATCC 43494 / DSM 8903 / Tp8T 6331) protein is Dihydroorotase.